We begin with the raw amino-acid sequence, 273 residues long: Large ribosomal subunit protein uL2c (273 aa).

A compositionally biased stretch (polar residues) spans 1 to 31 (MAIHLSKTSSPSTRNGAVNSQVKSNSRNRLI). 2 disordered regions span residues 1–53 (MAIH…GHRG) and 222–273 (MNPV…RRSK).

This sequence belongs to the universal ribosomal protein uL2 family. As to quaternary structure, part of the 50S ribosomal subunit.

The protein localises to the plastid. It is found in the chloroplast. The protein is Large ribosomal subunit protein uL2c (rpl2) of Pisum sativum (Garden pea).